The following is a 550-amino-acid chain: Carboxypeptidase Y homolog A (550 aa).

The signal sequence occupies residues Met1–Pro18. The propeptide occupies Leu19–Lys131. The segment at Gln20–Val39 is disordered. Intrachain disulfides connect Cys185-Cys424, Cys319-Cys333, Cys343-Cys366, Cys350-Cys359, and Cys388-Cys394. N-linked (GlcNAc...) asparagine glycans are attached at residues Asn203 and Asn216. Residue Ser272 is part of the active site. The N-linked (GlcNAc...) asparagine glycan is linked to Asn289. An N-linked (GlcNAc...) asparagine glycan is attached at Asn387. The active site involves Asp463. N-linked (GlcNAc...) asparagine glycans are attached at residues Asn493 and Asn514. His525 is a catalytic residue.

It belongs to the peptidase S10 family.

It is found in the vacuole. The enzyme catalyses Release of a C-terminal amino acid with broad specificity.. Functionally, vacuolar carboxypeptidase involved in degradation of small peptides. Digests preferentially peptides containing an aliphatic or hydrophobic residue in P1' position, as well as methionine, leucine or phenylalanine in P1 position of ester substrate. The polypeptide is Carboxypeptidase Y homolog A (CPYA) (Paracoccidioides brasiliensis (strain Pb03)).